We begin with the raw amino-acid sequence, 127 residues long: Probable toxin y4kH (127 aa).

It belongs to the MbcT/ParT/Res family.

Its function is as follows. Probable toxic component of a type II toxin-antitoxin (TA) system. It is not known which gene encodes its antitoxin. The chain is Probable toxin y4kH from Sinorhizobium fredii (strain NBRC 101917 / NGR234).